Consider the following 553-residue polypeptide: MTPAALAELLRNTAVDVLASRDLDTSVIPAAVTVERPRNPEHGDYATNIAMQVAKKAGVAPRDLAGWLAEALTGQDGIDSVEVAGPGFLNLRLAADAQGQILREVLDATDAYGRGAKYQGLKVNLEFVSANPTGPVHLGGTRWAAVGDALGRTLEAQGAEVTREYYFNDAGAQIDRFVRSLIAAARGEAAPEDGYGGAYIGEIANQVLEAEPTALDLPEAERHETFRRIGVGLMFDEVKRSLHDFGVDFDVYFHEDSLHTSGAVEKSVEQLKESGHLYFADGAWWLRSTEFGDDKDRVLIKSDGTTAYIAGDVAYLRDKRNRGFDLCIYMLGADHHGYIPRLKAAAAAFDDDPDAVEVLIGQMVNLVKDGKPVRMSKRAGTVLRLEDLVDAVGVDAARYSLIRSSVDSALDIDLDLISKRSNENPVFYVQYAHARLSSLQRNAASLGIDRGSVADADLSLLTHEREGDLIRTLGEYPRVVRSAAELREPHRIARYLEDLASAYHKFYDACRVLQPGDDQATPLTIARLQLCEAARQVLANGLGLLGVSAPEQM.

The 'HIGH' region signature appears at 130–140 (ANPTGPVHLGG).

It belongs to the class-I aminoacyl-tRNA synthetase family. In terms of assembly, monomer.

It localises to the cytoplasm. The catalysed reaction is tRNA(Arg) + L-arginine + ATP = L-arginyl-tRNA(Arg) + AMP + diphosphate. In Saccharopolyspora erythraea (strain ATCC 11635 / DSM 40517 / JCM 4748 / NBRC 13426 / NCIMB 8594 / NRRL 2338), this protein is Arginine--tRNA ligase.